Here is a 556-residue protein sequence, read N- to C-terminus: Membrane protein insertase YidC (556 aa).

A helical transmembrane segment spans residues 7–27 (ILLVALAVVAYLMVLQWNQDY). 2 disordered regions span residues 35–59 (ETAQSQPAAPALPDSPSATTEGNAN) and 126–152 (SSERTYEAQSGLIGDGPDKASGRPQYS). A compositionally biased stretch (low complexity) spans 36 to 54 (TAQSQPAAPALPDSPSATT). Helical transmembrane passes span 365 to 385 (LLGNWGWSIIVLTIVIKLAFF), 435 to 455 (LGGCLPILVQMPVFLALYWVL), 468 to 488 (FWITDLSIKDPYFILPIIMGV), and 513 to 533 (PIIFTFFFLWFPAGLVLYWVV).

This sequence belongs to the OXA1/ALB3/YidC family. Type 1 subfamily. Interacts with the Sec translocase complex via SecD. Specifically interacts with transmembrane segments of nascent integral membrane proteins during membrane integration.

The protein resides in the cell inner membrane. Functionally, required for the insertion and/or proper folding and/or complex formation of integral membrane proteins into the membrane. Involved in integration of membrane proteins that insert both dependently and independently of the Sec translocase complex, as well as at least some lipoproteins. Aids folding of multispanning membrane proteins. This chain is Membrane protein insertase YidC, found in Stutzerimonas stutzeri (strain A1501) (Pseudomonas stutzeri).